We begin with the raw amino-acid sequence, 607 residues long: Elongation factor 4 (607 aa).

One can recognise a tr-type G domain in the interval S11–A193. Residues D23–T28 and N140–D143 each bind GTP.

Belongs to the TRAFAC class translation factor GTPase superfamily. Classic translation factor GTPase family. LepA subfamily.

Its subcellular location is the cell membrane. It carries out the reaction GTP + H2O = GDP + phosphate + H(+). Functionally, required for accurate and efficient protein synthesis under certain stress conditions. May act as a fidelity factor of the translation reaction, by catalyzing a one-codon backward translocation of tRNAs on improperly translocated ribosomes. Back-translocation proceeds from a post-translocation (POST) complex to a pre-translocation (PRE) complex, thus giving elongation factor G a second chance to translocate the tRNAs correctly. Binds to ribosomes in a GTP-dependent manner. The sequence is that of Elongation factor 4 from Bacillus cereus (strain B4264).